Here is a 186-residue protein sequence, read N- to C-terminus: Peptidyl-tRNA hydrolase (186 aa).

Tyrosine 16 serves as a coordination point for tRNA. Histidine 21 acts as the Proton acceptor in catalysis. TRNA-binding residues include tyrosine 60 and asparagine 62.

It belongs to the PTH family. In terms of assembly, monomer.

It is found in the cytoplasm. The enzyme catalyses an N-acyl-L-alpha-aminoacyl-tRNA + H2O = an N-acyl-L-amino acid + a tRNA + H(+). Functionally, hydrolyzes ribosome-free peptidyl-tRNAs (with 1 or more amino acids incorporated), which drop off the ribosome during protein synthesis, or as a result of ribosome stalling. Its function is as follows. Catalyzes the release of premature peptidyl moieties from peptidyl-tRNA molecules trapped in stalled 50S ribosomal subunits, and thus maintains levels of free tRNAs and 50S ribosomes. This Tropheryma whipplei (strain Twist) (Whipple's bacillus) protein is Peptidyl-tRNA hydrolase.